The primary structure comprises 312 residues: uncharacterized protein (312 aa).

In terms of domain architecture, HTH lysR-type spans 8-65 (PGLTCFEIFLAIAEAGSLGGAARELGLTQQAVSRRLASMEAQIGVRLAIRTTRGSQLT). Residues 25–45 (LGGAARELGLTQQAVSRRLAS) constitute a DNA-binding region (H-T-H motif).

The protein belongs to the LysR transcriptional regulatory family.

This is an uncharacterized protein from Mycobacterium tuberculosis (strain CDC 1551 / Oshkosh).